Consider the following 187-residue polypeptide: Large ribosomal subunit protein uL5 (187 aa).

The protein belongs to the universal ribosomal protein uL5 family. As to quaternary structure, part of the 50S ribosomal subunit; part of the 5S rRNA/L5/L18/L25 subcomplex. Contacts the 5S rRNA and the P site tRNA. Forms a bridge to the 30S subunit in the 70S ribosome.

This is one of the proteins that bind and probably mediate the attachment of the 5S RNA into the large ribosomal subunit, where it forms part of the central protuberance. In the 70S ribosome it contacts protein S13 of the 30S subunit (bridge B1b), connecting the 2 subunits; this bridge is implicated in subunit movement. Contacts the P site tRNA; the 5S rRNA and some of its associated proteins might help stabilize positioning of ribosome-bound tRNAs. The sequence is that of Large ribosomal subunit protein uL5 from Mycolicibacterium paratuberculosis (strain ATCC BAA-968 / K-10) (Mycobacterium paratuberculosis).